A 390-amino-acid polypeptide reads, in one-letter code: Uroporphyrinogen decarboxylase 2, chloroplastic (390 aa).

The transit peptide at 1 to 30 (MATACPPLSLQPAYLSGRSARARRPPPAVR) directs the protein to the chloroplast. Substrate contacts are provided by residues 70–74 (RQAGR), Phe89, Ser119, Asp120, Tyr197, Ser252, and His367.

It belongs to the uroporphyrinogen decarboxylase family. As to quaternary structure, homodimer.

It is found in the plastid. Its subcellular location is the chloroplast. The catalysed reaction is uroporphyrinogen III + 4 H(+) = coproporphyrinogen III + 4 CO2. The protein operates within porphyrin-containing compound metabolism; protoporphyrin-IX biosynthesis; coproporphyrinogen-III from 5-aminolevulinate: step 4/4. In terms of biological role, catalyzes the decarboxylation of four acetate groups of uroporphyrinogen-III to yield coproporphyrinogen-III. In Oryza sativa subsp. japonica (Rice), this protein is Uroporphyrinogen decarboxylase 2, chloroplastic.